The following is a 379-amino-acid chain: Cytochrome b (379 aa).

The next 4 membrane-spanning stretches (helical) occupy residues 34–54, 78–99, 114–134, and 179–199; these read YGSL…FLSM, WLLR…YLHA, WNIG…GYVL, and FFAF…LHIM. Heme b-binding residues include H84 and H98. The heme b site is built by H183 and H197. Residue H202 coordinates a ubiquinone. The next 4 helical transmembrane spans lie at 227 to 247, 289 to 309, 321 to 341, and 349 to 369; these read IKDT…VLFE, LGGV…PLTS, LNKT…WIGG, and IIIG…SPTI.

Belongs to the cytochrome b family. In terms of assembly, the main subunits of complex b-c1 are: cytochrome b, cytochrome c1 and the Rieske protein. Requires heme b as cofactor.

The protein resides in the mitochondrion inner membrane. Functionally, component of the ubiquinol-cytochrome c reductase complex (complex III or cytochrome b-c1 complex) that is part of the mitochondrial respiratory chain. The b-c1 complex mediates electron transfer from ubiquinol to cytochrome c. Contributes to the generation of a proton gradient across the mitochondrial membrane that is then used for ATP synthesis. This Lumbricus terrestris (Common earthworm) protein is Cytochrome b (MT-CYB).